A 413-amino-acid polypeptide reads, in one-letter code: tRNA (guanine-N(7)-)-methyltransferase non-catalytic subunit wdr4 (413 aa).

WD repeat units lie at residues 101-140, 144-183, 187-227, and 286-328; these read WVVR…KAGE, GHLS…NIQA, GHTE…RLHS, and TLTL…WRLC. A disordered region spans residues 386-413; the sequence is KKRAAAANGSKPNKKSKTESGAVPQSTS.

It belongs to the WD repeat TRM82 family. In terms of assembly, non-catalytic component of the METTL1-WDR4 complex, composed of mettl1 and wdr4.

It is found in the nucleus. Its pathway is tRNA modification; N(7)-methylguanine-tRNA biosynthesis. In terms of biological role, non-catalytic component of the METTL1-WDR4 methyltransferase complex required for the formation of N(7)-methylguanine in a subset of RNA species, such as tRNAs, mRNAs and microRNAs (miRNAs). In the METTL1-WDR4 methyltransferase complex, wdr4 acts as a scaffold for tRNA-binding. Required for the formation of N(7)-methylguanine at position 46 (m7G46) in a large subset of tRNAs that contain the 5'-RAGGU-3' motif within the variable loop. M7G46 interacts with C13-G22 in the D-loop to stabilize tRNA tertiary structure and protect tRNAs from decay. Also required for the formation of N(7)-methylguanine at internal sites in a subset of mRNAs. Also required for methylation of a specific subset of miRNAs. The sequence is that of tRNA (guanine-N(7)-)-methyltransferase non-catalytic subunit wdr4 (wdr4) from Danio rerio (Zebrafish).